Reading from the N-terminus, the 465-residue chain is MITGKIVQIIGAVVDVEFSQQSVPKIFNALKVDNQGSILILEVQQQLGSGIVRTIAMGSSNGLKRGLLVVDLEHGIKVPVGTATLGRIVNVLGQPIDMKGPLKNHDNSDIEYWEIHRKAPSYSEQLTSYEVLETGIKVIDLICPFSKGGKVGLFGGAGVGKTVNMMELIRNIATEHSGYSVFTGVGERTREGNDFYHEMSDSRVLDKVSLVYGQMNEPPGNRLRVAFTGLTIAEKFRNEGHDVLLFIDNIYRYTLAGTEVSALLGRIPSAVGYQPTLSEEMGVLQERITSTNKGSITSIQAVYVPADDLTDPSPATTFSHLDSTITLSRQIVSLGIYPAIDPLNSTSRQLDPRIVGQLHYDVALGVRSILQRYQELKDIIAILGMDELSEDDKILVSRARKIQKFLSQPFFVAEIFTGFSGKYVKLQDTINGFKDIIEGKVDHVPEQAFYMVGSINEVIEKSKKL.

155-162 provides a ligand contact to ATP; it reads GGAGVGKT.

This sequence belongs to the ATPase alpha/beta chains family. As to quaternary structure, F-type ATPases have 2 components, CF(1) - the catalytic core - and CF(0) - the membrane proton channel. CF(1) has five subunits: alpha(3), beta(3), gamma(1), delta(1), epsilon(1). CF(0) has three main subunits: a(1), b(2) and c(9-12). The alpha and beta chains form an alternating ring which encloses part of the gamma chain. CF(1) is attached to CF(0) by a central stalk formed by the gamma and epsilon chains, while a peripheral stalk is formed by the delta and b chains.

It localises to the cell membrane. It carries out the reaction ATP + H2O + 4 H(+)(in) = ADP + phosphate + 5 H(+)(out). Produces ATP from ADP in the presence of a proton gradient across the membrane. The catalytic sites are hosted primarily by the beta subunits. This Buchnera aphidicola subsp. Baizongia pistaciae (strain Bp) protein is ATP synthase subunit beta.